Reading from the N-terminus, the 360-residue chain is Membrane-bound lytic murein transglycosylase C (360 aa).

The N-terminal stretch at 1-16 is a signal peptide; that stretch reads MKKYLALALIAPLLVS. The N-palmitoyl cysteine moiety is linked to residue cysteine 17. Cysteine 17 is lipidated: S-diacylglycerol cysteine.

This sequence belongs to the transglycosylase Slt family.

It localises to the cell outer membrane. It carries out the reaction Exolytic cleavage of the (1-&gt;4)-beta-glycosidic linkage between N-acetylmuramic acid (MurNAc) and N-acetylglucosamine (GlcNAc) residues in peptidoglycan, from either the reducing or the non-reducing ends of the peptidoglycan chains, with concomitant formation of a 1,6-anhydrobond in the MurNAc residue.. In terms of biological role, murein-degrading enzyme. May play a role in recycling of muropeptides during cell elongation and/or cell division. The polypeptide is Membrane-bound lytic murein transglycosylase C (Klebsiella pneumoniae (strain 342)).